We begin with the raw amino-acid sequence, 156 residues long: MAKEEIKIIAQNKKAYHDYFIEETYEAGIVLSGTEVKSIRMGKVNLKDSFARVENNEVYLYNMHISPYEKGNIFNKDPLRTRKLLLNRHEINKLIGYVTRKGYTLIPTKLYLKRGLVKVELAVARGKKLYDKREDIARRDAKSELEKHFKEKQLGI.

The protein belongs to the SmpB family.

The protein localises to the cytoplasm. In terms of biological role, required for rescue of stalled ribosomes mediated by trans-translation. Binds to transfer-messenger RNA (tmRNA), required for stable association of tmRNA with ribosomes. tmRNA and SmpB together mimic tRNA shape, replacing the anticodon stem-loop with SmpB. tmRNA is encoded by the ssrA gene; the 2 termini fold to resemble tRNA(Ala) and it encodes a 'tag peptide', a short internal open reading frame. During trans-translation Ala-aminoacylated tmRNA acts like a tRNA, entering the A-site of stalled ribosomes, displacing the stalled mRNA. The ribosome then switches to translate the ORF on the tmRNA; the nascent peptide is terminated with the 'tag peptide' encoded by the tmRNA and targeted for degradation. The ribosome is freed to recommence translation, which seems to be the essential function of trans-translation. This Thermoanaerobacter pseudethanolicus (strain ATCC 33223 / 39E) (Clostridium thermohydrosulfuricum) protein is SsrA-binding protein.